A 174-amino-acid polypeptide reads, in one-letter code: CASP-like protein 4D2 (174 aa).

At 1–14 (MAPPPPSPPAVSLK) the chain is on the cytoplasmic side. The chain crosses the membrane as a helical span at residues 15 to 35 (VLLLLLRVLTGVFLVIALIIL). The Extracellular segment spans residues 36 to 60 (STNSVTIVSQGSALKFHFKDVYAYR). Residues 61-81 (YMLSAAVIGLVYAVIQLFFTI) traverse the membrane as a helical segment. The Cytoplasmic portion of the chain corresponds to 82 to 97 (SEFATGVKNPFNYQLD). A helical transmembrane segment spans residues 98-118 (FYGDKLISYLVATGSAAGFGV). The Extracellular segment spans residues 119–150 (TKDLKDTFLALVALDSTDPVDKFFSKGYASAS). Residues 151 to 171 (LLLFAFICLAVLSVFSSFAMA) form a helical membrane-spanning segment. Over 172–174 (KRN) the chain is Cytoplasmic.

It belongs to the Casparian strip membrane proteins (CASP) family. In terms of assembly, homodimer and heterodimers.

It localises to the cell membrane. The polypeptide is CASP-like protein 4D2 (Arabidopsis thaliana (Mouse-ear cress)).